A 1238-amino-acid polypeptide reads, in one-letter code: Protein MMS22-like (1238 aa).

It belongs to the MMS22 family. MMS22L subfamily. In terms of assembly, component of the MMS22L-TONSL complex, a complex at least composed of MMS22L and TONSL/NFKBIL2. Interacts with RAD51; interaction is direct. Post-translationally, degraded by the ubiquitin-proteasome system upon replication stress.

It is found in the nucleus. The protein resides in the chromosome. Component of the MMS22L-TONSL complex, a complex that promotes homologous recombination-mediated repair of double-strand breaks (DSBs) at stalled or collapsed replication forks. The MMS22L-TONSL complex is required to maintain genome integrity during DNA replication. It mediates the assembly of RAD51 filaments on single-stranded DNA (ssDNA): the MMS22L-TONSL complex is recruited to DSBs following histone replacement by histone chaperones and eviction of the replication protein A complex (RPA/RP-A) from DSBs. Following recruitment to DSBs, the TONSL-MMS22L complex promotes recruitment of RAD51 filaments and subsequent homologous recombination. Within the complex, MMS22L acts by binding ssDNA. In Mus musculus (Mouse), this protein is Protein MMS22-like (Mms22l).